The sequence spans 325 residues: NADH-quinone oxidoreductase subunit H (325 aa).

8 consecutive transmembrane segments (helical) span residues 5–25 (LIII…AAAY), 75–95 (FVYW…FVLI), 117–137 (VGVV…VLAG), 157–177 (ISYE…TGTL), 190–210 (WLIW…FAET), 240–260 (FFLG…TLFF), 268–288 (DIPI…FMWV), and 305–325 (WKVL…FTLV).

It belongs to the complex I subunit 1 family. NDH-1 is composed of 14 different subunits. Subunits NuoA, H, J, K, L, M, N constitute the membrane sector of the complex.

It localises to the cell inner membrane. The catalysed reaction is a quinone + NADH + 5 H(+)(in) = a quinol + NAD(+) + 4 H(+)(out). NDH-1 shuttles electrons from NADH, via FMN and iron-sulfur (Fe-S) centers, to quinones in the respiratory chain. The immediate electron acceptor for the enzyme in this species is believed to be ubiquinone. Couples the redox reaction to proton translocation (for every two electrons transferred, four hydrogen ions are translocated across the cytoplasmic membrane), and thus conserves the redox energy in a proton gradient. This subunit may bind ubiquinone. The polypeptide is NADH-quinone oxidoreductase subunit H (Protochlamydia amoebophila (strain UWE25)).